We begin with the raw amino-acid sequence, 346 residues long: Methylthioribose-1-phosphate isomerase (346 aa).

Residues 46–48 (RGA), R89, and Q196 each bind substrate. The active-site Proton donor is D237. Residue 247–248 (NK) participates in substrate binding.

The protein belongs to the eIF-2B alpha/beta/delta subunits family. MtnA subfamily.

The enzyme catalyses 5-(methylsulfanyl)-alpha-D-ribose 1-phosphate = 5-(methylsulfanyl)-D-ribulose 1-phosphate. It functions in the pathway amino-acid biosynthesis; L-methionine biosynthesis via salvage pathway; L-methionine from S-methyl-5-thio-alpha-D-ribose 1-phosphate: step 1/6. Catalyzes the interconversion of methylthioribose-1-phosphate (MTR-1-P) into methylthioribulose-1-phosphate (MTRu-1-P). The sequence is that of Methylthioribose-1-phosphate isomerase from Geobacter metallireducens (strain ATCC 53774 / DSM 7210 / GS-15).